We begin with the raw amino-acid sequence, 352 residues long: Ion-translocating oxidoreductase complex subunit D (352 aa).

Transmembrane regions (helical) follow at residues 20-40, 42-62, 69-91, and 123-143; these read IMLL…WFFG, GTLF…AIVL, VASH…SIPP, and PAMI…TSWL. Thr187 carries the FMN phosphoryl threonine modification. The next 5 helical transmembrane spans lie at 215–235, 242–262, 267–287, 301–321, and 322–342; these read LAGV…VFLL, WHIP…GWLF, LASP…FFIL, LIFG…GGYP, and DGVA…DYYT.

It belongs to the NqrB/RnfD family. The complex is composed of six subunits: RsxA, RsxB, RsxC, RsxD, RsxE and RsxG. FMN is required as a cofactor.

Its subcellular location is the cell inner membrane. Functionally, part of a membrane-bound complex that couples electron transfer with translocation of ions across the membrane. Required to maintain the reduced state of SoxR. The chain is Ion-translocating oxidoreductase complex subunit D from Salmonella paratyphi B (strain ATCC BAA-1250 / SPB7).